Consider the following 530-residue polypeptide: Phosphoenolpyruvate carboxykinase (ATP) (530 aa).

Arg-60, Tyr-195, and Lys-201 together coordinate substrate. Residues Lys-201, His-221, and 237–245 (GLSGTGKTT) contribute to the ATP site. Mn(2+) contacts are provided by Lys-201 and His-221. A Mn(2+)-binding site is contributed by Asp-258. Residues Glu-286, Arg-324, 443–444 (RI), and Ser-449 each bind ATP. Arg-324 serves as a coordination point for substrate.

It belongs to the phosphoenolpyruvate carboxykinase (ATP) family. The cofactor is Mn(2+).

The protein resides in the cytoplasm. It carries out the reaction oxaloacetate + ATP = phosphoenolpyruvate + ADP + CO2. Its pathway is carbohydrate biosynthesis; gluconeogenesis. Its function is as follows. Involved in the gluconeogenesis. Catalyzes the conversion of oxaloacetate (OAA) to phosphoenolpyruvate (PEP) through direct phosphoryl transfer between the nucleoside triphosphate and OAA. This chain is Phosphoenolpyruvate carboxykinase (ATP), found in Pelobacter propionicus (strain DSM 2379 / NBRC 103807 / OttBd1).